Here is a 715-residue protein sequence, read N- to C-terminus: Palmitoyltransferase ZDHHC5 (715 aa).

Over 1-13 the chain is Cytoplasmic; that stretch reads MPAESGKRFKPSK. A helical membrane pass occupies residues 14 to 34; that stretch reads YVPVSAAAIFLVGATTLFFAF. At 35-38 the chain is on the extracellular side; that stretch reads TCPG. Residues 39–59 form a helical membrane-spanning segment; it reads LSLYVSPAVPIYNAIMFLFVL. Topologically, residues 60–148 are cytoplasmic; the sequence is ANFSMATFMD…NCIGRRNYRY (89 aa). Tyr91 carries the phosphotyrosine modification. A DHHC domain is found at 104 to 154; it reads KWCATCRFYRPPRCSHCSVCDNCVEEFDHHCPWVNNCIGRRNYRYFFLFLL. The active-site S-palmitoyl cysteine intermediate is Cys134. The helical transmembrane segment at 149 to 169 threads the bilayer; it reads FFLFLLSLTAHIMGVFGFGLL. Topologically, residues 170-191 are extracellular; it reads YVLYHIEELSGVRTAVTMAVMC. A helical membrane pass occupies residues 192–212; the sequence is VAGLFFIPVAGLTGFHVVLVA. Topologically, residues 213-715 are cytoplasmic; sequence RGRTTNEQVT…VGGTTYEISV (503 aa). Ser247 is subject to Phosphoserine. The interval 289–715 is disordered; that stretch reads GELRRTKSKG…VGGTTYEISV (427 aa). Thr294 carries the phosphothreonine modification. Phosphoserine is present on residues Ser296 and Ser299. Thr303 carries the post-translational modification Phosphothreonine. The residue at position 345 (Ser345) is a Phosphoserine. Phosphothreonine occurs at positions 348 and 350. Low complexity predominate over residues 359-373; that stretch reads SSSSTSAAMPHSSSA. Ser380, Ser398, Ser406, and Ser409 each carry phosphoserine. Thr411 carries the phosphothreonine modification. Phosphoserine occurs at positions 415, 425, 429, and 432. The segment covering 422–432 has biased composition (low complexity); it reads SSGSRSSSLKS. Position 436 is a phosphothreonine (Thr436). Polar residues predominate over residues 442–478; that stretch reads QLQSIRSEGTTSTSYKSLANQTRNGSLSYDSLLTPSD. Phosphoserine occurs at positions 529 and 554. Arg617 bears the Omega-N-methylarginine mark. Ser621 carries the post-translational modification Phosphoserine. Thr659 bears the Phosphothreonine mark. The segment covering 666–677 has biased composition (polar residues); it reads LKTTYSKSNGQP. A phosphoserine mark is found at Ser684 and Ser694. Arg697 carries the post-translational modification Omega-N-methylarginine.

It belongs to the DHHC palmitoyltransferase family. ERF2/ZDHHC9 subfamily.

It localises to the cell membrane. It carries out the reaction L-cysteinyl-[protein] + hexadecanoyl-CoA = S-hexadecanoyl-L-cysteinyl-[protein] + CoA. Its function is as follows. Palmitoyltransferase that catalyzes the addition of palmitate onto various protein substrates such as CTNND2, CD36, GSDMD, NLRP3, NOD1, NOD2, STAT3 and S1PR1 thus plays a role in various biological processes including cell adhesion, inflammation, fatty acid uptake, bacterial sensing or cardiac functions. Plays an important role in the regulation of synapse efficacy by mediating palmitoylation of delta-catenin/CTNND2, thereby increasing synaptic delivery and surface stabilization of alpha-amino-3-hydroxy-5-methyl-4-isoxazole propionic acid receptors (AMPARs). Under basal conditions, remains at the synaptic membrane through FYN-mediated phosphorylation that prevents association with endocytic proteins. Neuronal activity enhances the internalization and trafficking of DHHC5 from spines to dendritic shafts where it palmitoylates delta-catenin/CTNND2. Regulates cell adhesion at the plasma membrane by palmitoylating GOLGA7B and DSG2. Plays a role in innate immune response by mediating the palmitoylation of NOD1 and NOD2 and their proper recruitment to the bacterial entry site and phagosomes. Also participates in fatty acid uptake by palmitoylating CD36 and thereby targeting it to the plasma membrane. Upon binding of fatty acids to CD36, gets phosphorylated by LYN leading to inactivation and subsequent CD36 caveolar endocytosis. Controls oligodendrocyte development by catalyzing STAT3 palmitoylation. Acts as a regulator of inflammatory response by mediating palmitoylation of NLRP3 and GSDMD. Palmitoylates NLRP3 to promote inflammasome assembly and activation. Activates pyroptosis by catalyzing palmitoylation of gasdermin-D (GSDMD), thereby promoting membrane translocation and pore formation of GSDMD. The protein is Palmitoyltransferase ZDHHC5 (ZDHHC5) of Pan troglodytes (Chimpanzee).